The chain runs to 363 residues: tRNA-specific 2-thiouridylase MnmA (363 aa).

Residues 13–20 (GLSGGVDS) and methionine 39 each bind ATP. Residues 99–101 (NPD) form an interaction with target base in tRNA region. The Nucleophile role is filled by cysteine 104. The cysteines at positions 104 and 200 are disulfide-linked. Glycine 128 contacts ATP. The interaction with tRNA stretch occupies residues 150-152 (KDQ). Cysteine 200 (cysteine persulfide intermediate) is an active-site residue. Residues 310 to 311 (RY) form an interaction with tRNA region.

It belongs to the MnmA/TRMU family.

The protein resides in the cytoplasm. The enzyme catalyses S-sulfanyl-L-cysteinyl-[protein] + uridine(34) in tRNA + AH2 + ATP = 2-thiouridine(34) in tRNA + L-cysteinyl-[protein] + A + AMP + diphosphate + H(+). Its function is as follows. Catalyzes the 2-thiolation of uridine at the wobble position (U34) of tRNA, leading to the formation of s(2)U34. This Ruthia magnifica subsp. Calyptogena magnifica protein is tRNA-specific 2-thiouridylase MnmA.